The primary structure comprises 234 residues: Phosphoglycolate phosphatase (234 aa).

Asp8 serves as the catalytic Nucleophile. Residues Asp8 and Asp10 each coordinate Mg(2+). Residue Lys155 coordinates substrate. Residues Asp178 and Asp182 each contribute to the Mg(2+) site.

Belongs to the archaeal SPP-like hydrolase family. Mg(2+) serves as cofactor.

The catalysed reaction is 2-phosphoglycolate + H2O = glycolate + phosphate. Catalyzes the dephosphorylation of 2-phosphoglycolate. This chain is Phosphoglycolate phosphatase, found in Thermococcus sibiricus (strain DSM 12597 / MM 739).